The following is a 252-amino-acid chain: 1-(5-phosphoribosyl)-5-[(5-phosphoribosylamino)methylideneamino] imidazole-4-carboxamide isomerase (252 aa).

The Proton acceptor role is filled by Asp10. Asp129 acts as the Proton donor in catalysis.

This sequence belongs to the HisA/HisF family.

It is found in the cytoplasm. It carries out the reaction 1-(5-phospho-beta-D-ribosyl)-5-[(5-phospho-beta-D-ribosylamino)methylideneamino]imidazole-4-carboxamide = 5-[(5-phospho-1-deoxy-D-ribulos-1-ylimino)methylamino]-1-(5-phospho-beta-D-ribosyl)imidazole-4-carboxamide. It functions in the pathway amino-acid biosynthesis; L-histidine biosynthesis; L-histidine from 5-phospho-alpha-D-ribose 1-diphosphate: step 4/9. The chain is 1-(5-phosphoribosyl)-5-[(5-phosphoribosylamino)methylideneamino] imidazole-4-carboxamide isomerase from Frankia casuarinae (strain DSM 45818 / CECT 9043 / HFP020203 / CcI3).